We begin with the raw amino-acid sequence, 576 residues long: Putative SPbeta prophage-derived single-strand DNA-specific exonuclease YorK (576 aa).

Position 473 is a phosphotyrosine (Tyr-473).

Belongs to the RecJ family.

In terms of biological role, putative single-stranded-DNA-specific exonuclease. This chain is Putative SPbeta prophage-derived single-strand DNA-specific exonuclease YorK (yorK), found in Bacillus subtilis (strain 168).